Reading from the N-terminus, the 790-residue chain is PGC-1 and ERR-induced regulator in muscle protein 1 (790 aa).

4 disordered regions span residues 38 to 391 (LLSS…TPIS), 425 to 449 (VASSPPVSEAVPRMTESSGLVSTPV), 507 to 545 (SVAGPSPNKPGSGQASARPSAPQTATGAHGGPGAWEAVA), and 626 to 648 (QRSRRRGSPEPLPRADPVPAPIP). Residues 40–52 (SSDIDQGDSSGSS) show a composition bias toward low complexity. Polar residues-rich tracts occupy residues 80-89 (ATQQPVSRSQ) and 98-107 (TGQQTPSTSA). The segment covering 111-123 (APPSLGPGASPPS) has biased composition (low complexity). The span at 146 to 157 (APRPPGEPPGSP) shows a compositional bias: pro residues. Positions 158 to 169 (KSPGHSTGSQRP) are enriched in low complexity. The segment covering 170–179 (PDSPGAPPRS) has biased composition (pro residues). Residues 366–391 (KPQSDTAVSTPASEPQSSVALSTPIS) are compositionally biased toward polar residues. Over residues 515 to 532 (KPGSGQASARPSAPQTAT) the composition is skewed to polar residues. The segment covering 635-648 (EPLPRADPVPAPIP) has biased composition (pro residues).

As to expression, muscle-specific expression is increased by endurance exercise.

The protein localises to the cytoplasm. It is found in the nucleus. Functionally, regulates the expression of selective PPARGC1A/B and ESRRA/B/G target genes with roles in glucose and lipid metabolism, energy transfer, contractile function, muscle mitochondrial biogenesis and oxidative capacity. Required for the efficient induction of MT-CO2, MT-CO3, COX4I1, TFB1M, TFB2M, POLRMT and SIRT3 by PPARGC1A. Positively regulates the PPARGC1A/ESRRG-induced expression of CKMT2, TNNI3 and SLC2A4 and negatively regulates the PPARGC1A/ESRRG-induced expression of PDK4. The sequence is that of PGC-1 and ERR-induced regulator in muscle protein 1 (PERM1) from Homo sapiens (Human).